The chain runs to 605 residues: MKRIIFNFCFVWLAVSAFAGSKVVEMRNYGLVPDTHENLSPKLQKALQDIKSQVALGDKVTLLFESGRYDFHPEGAAVREYYISNHDQDNPKTVGFPLEDWKGLTVDGQGADFIFHGRMLPLSLLRSENCTLRNFSIDFETPHIAQVKILESGEEGITFEPAAWVKCRINEKGFFEAYGEGWSSAPQGGIAFEEKTKRLVYRTSDLWCPMEGVKEVSPRVYHAPQWKDARLKPGTVVALRTYYRPAPGIFLSNDKDTRLQNVKVHYAEGMGLLAQLCENITLDEFSVCLRGDKDPRYFTTQADATHFSSCRGKIDSRNGLYEGMMDDAINVHGTYLKIKQRLDDHTVIARYMHPQAYGFEWGVNGDEVQFVRSATMELTGGKNRVKEILPNDKDTVKGAKEYRITFAEPLDAEITDKEGFGIENLSWCPEVYFADNVIRNNRARGTLFSTPLKTVVERNLFDHTSGTAILLCGDCNGWFETGACRNVLIRNNRFINALTNMFQFTEAVISIYPEIPDLEHQKKYFHGGKGEKGVVIEDNYFETFDRPVLFAKSIDGLIFKNNVIRQNTDYPAFHHNKSRFRLLHTRNVKIEKNNFEDGDESIARE.

An N-terminal signal peptide occupies residues 1–19 (MKRIIFNFCFVWLAVSAFA). PbH1 repeat units follow at residues 428-450 (CPEV…LFST), 451-473 (PLKT…LLCG), and 484-538 (CRNV…VIED).

It belongs to the glycosyl hydrolase 110 family. B subfamily.

The enzyme catalyses Hydrolysis of terminal, non-reducing branched (1-&gt;3)-alpha-D-galactosidic residues, producing free D-galactose.. It catalyses the reaction Hydrolysis of terminal, non-reducing linear (1-&gt;3)-alpha-D-galactosidic residues, producing free D-galactose.. The catalysed reaction is Hydrolysis of terminal, non-reducing alpha-D-galactose residues in alpha-D-galactosides, including galactose oligosaccharides, galactomannans and galactolipids.. Functionally, alpha-galactosidase. Removes both branched alpha-1,3-linked galactose residues of blood group B antigens and linear alpha-1,3-linked galactose structures. In Phocaeicola vulgatus (strain ATCC 8482 / DSM 1447 / JCM 5826 / CCUG 4940 / NBRC 14291 / NCTC 11154) (Bacteroides vulgatus), this protein is Alpha-1,3-galactosidase B (glaB2).